A 192-amino-acid chain; its full sequence is Rhomboid protease GlpG (192 aa).

The Cytoplasmic segment spans residues 1–10 (MKNFLAQQGK). Residues 11 to 31 (ITLILTALCVLIYLAQQLGFE) traverse the membrane as a helical segment. Topologically, residues 32-57 (DDIMYLMHYPAYEEQDSEVWRYISHT) are periplasmic. A helical transmembrane segment spans residues 58–78 (LVHLSNLHILFNLSWFFIFGG). Residues 79-82 (MIER) are Cytoplasmic-facing. A helical transmembrane segment spans residues 83-103 (TFGSVKLLMLYVVASAITGYV). The Periplasmic segment spans residues 104 to 107 (QNYV). Residues 108–128 (SGPAFFGLSGVVYAVLGYVFI) traverse the membrane as a helical segment. The active-site Nucleophile is serine 116. The Cytoplasmic portion of the chain corresponds to 129–141 (RDKLNHHLFDLPE). Residues 142–162 (GFFTMLLVGIALGFISPLFGV) traverse the membrane as a helical segment. Glutamate 163 is a topological domain (periplasmic). The helical transmembrane segment at 164-184 (MGNAAHISGLIVGLIWGFIDS) threads the bilayer. Histidine 169 is a catalytic residue. Topologically, residues 185–192 (KLRKNSLE) are cytoplasmic.

The protein belongs to the peptidase S54 family.

Its subcellular location is the cell inner membrane. The enzyme catalyses Cleaves type-1 transmembrane domains using a catalytic dyad composed of serine and histidine that are contributed by different transmembrane domains.. Functionally, rhomboid-type serine protease that catalyzes intramembrane proteolysis. This is Rhomboid protease GlpG (glpG) from Haemophilus influenzae (strain ATCC 51907 / DSM 11121 / KW20 / Rd).